A 241-amino-acid polypeptide reads, in one-letter code: Trypsin-10 (241 aa).

A signal peptide spans 1-13 (MKSLIFVLLLGAV). A propeptide spans 14-19 (FAEEDK) (activation peptide). Residues 20–239 (IVGGYECTRH…LSGWVRDTMA (220 aa)) form the Peptidase S1 domain. Cystine bridges form between cysteine 26-cysteine 155, cysteine 44-cysteine 60, cysteine 128-cysteine 228, cysteine 135-cysteine 201, cysteine 166-cysteine 180, and cysteine 191-cysteine 215. Catalysis depends on charge relay system residues histidine 59 and aspartate 103. Serine 195 acts as the Charge relay system in catalysis.

The protein belongs to the peptidase S1 family.

It localises to the secreted. It is found in the extracellular space. It carries out the reaction Preferential cleavage: Arg-|-Xaa, Lys-|-Xaa.. This Gadus morhua (Atlantic cod) protein is Trypsin-10.